The chain runs to 270 residues: Homeobox protein pal-1 (270 aa).

3 disordered regions span residues 1-24, 96-130, and 175-201; these read MSVDVKSDFSENESSSTPSPTTVP, VKPPLSNGSSSSDSGMYPSPSDMMTPFPSTSSGAA, and LGNNHGKDRRSSSDGKTLPTGPGTNNV. Low complexity-rich tracts occupy residues 14-24 and 101-130; these read SSSTPSPTTVP and SNGSSSSDSGMYPSPSDMMTPFPSTSSGAA. Residues 206–265 constitute a DNA-binding region (homeobox); it reads ADKYRMVYSDYQRLELEKEFHTSPFITSDRKSQLSTMLSLTERQIKIWFQNRRAKDRRDK.

Belongs to the Caudal homeobox family. In terms of assembly, interacts with tir-1 and let-756. In terms of tissue distribution, blastomeres. Embryo. Oocytes.

The protein localises to the nucleus. Its subcellular location is the chromosome. The protein resides in the centromere. It is found in the kinetochore. Transcriptional activator. Interacts with promoter regions for tbx-8.9, tbx-9, elt-1, hnd-1, scrt-1, and vab-7 genes. Binds the sequence ATTTATGAC. Binds to the enhancer region of the hlh-1 gene promoter during embryonic body wall muscle development. Activates the gene for mab-5 in embryo development. Necessary for vab-7 expression in C blastomeres in the posterior of embryos. Required for posterior V6 neuroectoblast cell fate specification during postembryonic neurogenesis (patterning) which generates the characteristic ray lineage during male tail development. Binds to ced-3 promoter and activated expression which is crucial for tail-spike cell death. Has a role in E cell specification in endoderm development and body wall muscle development. The sequence is that of Homeobox protein pal-1 (pal-1) from Caenorhabditis elegans.